Here is a 352-residue protein sequence, read N- to C-terminus: Ion-translocating oxidoreductase complex subunit D (352 aa).

Helical transmembrane passes span I20–G40, G42–L62, V69–P91, and P123–L143. FMN phosphoryl threonine is present on T187. The next 5 helical transmembrane spans lie at L215–L235, W242–F262, L267–L287, L301–P321, and D322–T342.

This sequence belongs to the NqrB/RnfD family. The complex is composed of six subunits: RsxA, RsxB, RsxC, RsxD, RsxE and RsxG. FMN serves as cofactor.

The protein localises to the cell inner membrane. In terms of biological role, part of a membrane-bound complex that couples electron transfer with translocation of ions across the membrane. Required to maintain the reduced state of SoxR. The sequence is that of Ion-translocating oxidoreductase complex subunit D from Salmonella choleraesuis (strain SC-B67).